The chain runs to 322 residues: Acetylglutamate kinase (322 aa).

Residues 85 to 86 (GG), Arg-107, and Asn-211 contribute to the substrate site.

This sequence belongs to the acetylglutamate kinase family. ArgB subfamily.

It localises to the cytoplasm. The enzyme catalyses N-acetyl-L-glutamate + ATP = N-acetyl-L-glutamyl 5-phosphate + ADP. It functions in the pathway amino-acid biosynthesis; L-arginine biosynthesis; N(2)-acetyl-L-ornithine from L-glutamate: step 2/4. In terms of biological role, catalyzes the ATP-dependent phosphorylation of N-acetyl-L-glutamate. The polypeptide is Acetylglutamate kinase (Methanosarcina barkeri (strain Fusaro / DSM 804)).